A 194-amino-acid polypeptide reads, in one-letter code: Probable GTP-binding protein EngB (194 aa).

Positions 19 to 193 constitute an EngB-type G domain; sequence DCIQICFWGR…VLFIEENIFK (175 aa). GTP-binding positions include 27-34, 53-57, 70-73, 137-140, and 172-174; these read GRSNVGKS, GRTQF, DLPG, TKID, and VSS. Positions 34 and 55 each coordinate Mg(2+).

Belongs to the TRAFAC class TrmE-Era-EngA-EngB-Septin-like GTPase superfamily. EngB GTPase family. Mg(2+) serves as cofactor.

Necessary for normal cell division and for the maintenance of normal septation. This Mycoplasmopsis agalactiae (strain NCTC 10123 / CIP 59.7 / PG2) (Mycoplasma agalactiae) protein is Probable GTP-binding protein EngB.